An 802-amino-acid polypeptide reads, in one-letter code: DEAD-box ATP-dependent RNA helicase 28 (802 aa).

A disordered region spans residues 1–179; it reads MDADFRFDPD…TDKKSGVVDP (179 aa). 2 stretches are compositionally biased toward acidic residues: residues 76–131 and 138–169; these read GDSE…EELE and KSDE…EEEE. Coiled-coil stretches lie at residues 90-122 and 149-174; these read DSEE…GVEV and QDGE…DKKS. A Q motif motif is present at residues 194–222; the sequence is NSFLELNLSRPLLRACEALGYQKPTPIQA. The Helicase ATP-binding domain maps to 225–399; that stretch reads IPLALTGRDI…TLSLNKPVRL (175 aa). Residue 238-245 coordinates ATP; sequence AITGSGKT. The DEAD box signature appears at 347–350; sequence DEAD. The Helicase C-terminal domain occupies 429 to 573; that stretch reads VLLALCLKTF…SRIVAEKPVA (145 aa). Residues 572 to 616 adopt a coiled-coil conformation; sequence VAECAKLIEELEDQISTIIQEEREERILRKAEMEATKAENMIAHK. The disordered stretch occupies residues 639-802; the sequence is KAAKESTSQG…KSKSRYNRRK (164 aa). A compositionally biased stretch (polar residues) spans 644–659; it reads STSQGKSNSGVISAQQ. The segment covering 666–684 has biased composition (basic residues); that stretch reads KEKKRREREKNLPRKKRRR. A coiled-coil region spans residues 671 to 712; the sequence is REREKNLPRKKRRRLEAEREMLEDESEDEEEAKESKGGKKEK. Residues 691–702 are compositionally biased toward acidic residues; that stretch reads MLEDESEDEEEA. Basic residues predominate over residues 776 to 802; the sequence is RSLKKNNVMRKKSKNSFKSKSRYNRRK.

This sequence belongs to the DEAD box helicase family. DDX27/DRS1 subfamily.

It carries out the reaction ATP + H2O = ADP + phosphate + H(+). The chain is DEAD-box ATP-dependent RNA helicase 28 from Oryza sativa subsp. japonica (Rice).